A 1502-amino-acid chain; its full sequence is G patch domain-containing protein 8 (1502 aa).

The G-patch domain maps to 40–86; sequence SDNIGHRLLQKHGWKLGQGLGKSLQGRTDPIPIVVKYDVMGMGRMEM. Residues 89–124 adopt a coiled-coil conformation; the sequence is DYAEDATERRRVLEVEKEDTEELRQKYKDYVDKEKA. A C2H2-type zinc finger spans residues 136-160; that stretch reads FYCELCDKQYQKHQEFDNHINSYDH. Residues 172–251 form a disordered region; the sequence is REFARNVSSR…GATASCGLGS (80 aa). Basic and acidic residues predominate over residues 182–206; the sequence is SRKDEKKQEKALRRLHELAEQRKQA. A compositionally biased stretch (acidic residues) spans 223 to 233; that stretch reads VDEEGGEDDKD. A Glycyl lysine isopeptide (Lys-Gly) (interchain with G-Cter in SUMO2) cross-link involves residue lysine 311. Basic and acidic residues-rich tracts occupy residues 323–339 and 424–436; these read AEEG…EKSS and NTTH…ESKK. Disordered regions lie at residues 323-391 and 419-541; these read AEEG…ATEP and QMDG…FPVL. The segment covering 459-472 has biased composition (polar residues); sequence SEVSEQPKETSMTE. Lysine 479 carries the post-translational modification N6-acetyllysine. Position 491 is a phosphoserine (serine 491). Residues 491-519 show a composition bias toward polar residues; the sequence is SDQSLESHSQKVSETQMCESNSSKETSLA. A Glycyl lysine isopeptide (Lys-Gly) (interchain with G-Cter in SUMO2) cross-link involves residue lysine 577. Basic and acidic residues-rich tracts occupy residues 579–623 and 653–670; these read SRNK…EKIV and SETE…ERSG. The interval 579–1301 is disordered; that stretch reads SRNKDARTKG…ESTDGAEDAS (723 aa). A Phosphoserine modification is found at serine 653. The span at 671 to 692 shows a compositional bias: basic residues; it reads KSHRHKKKKKHKKSSKHKRKHK. Basic and acidic residues predominate over residues 693 to 707; that stretch reads ADTEEKSSKAESGEK. Positions 708–720 are enriched in basic residues; sequence SKKRKKRKRKKNK. Positions 733 to 743 are enriched in pro residues; it reads PEPPGSGSPAP. A phosphoserine mark is found at serine 738, serine 740, and serine 758. Residues 750–772 show a composition bias toward basic and acidic residues; that stretch reads AQDDSQRRSLPAEEGSSGKKDEG. Composition is skewed to basic residues over residues 799-809 and 852-867; these read AGTKRSSRSSH and SRSR…RSSR. The span at 868–896 shows a compositional bias: low complexity; sequence RSYSSSSDASSDQSCYSRQRSYSDDSYSD. Phosphoserine is present on residues serine 911 and serine 914. Residues 919-928 show a composition bias toward basic residues; that stretch reads SKHRSKRHKY. 5 positions are modified to phosphoserine: serine 981, serine 1009, serine 1014, serine 1033, and serine 1035. A compositionally biased stretch (basic and acidic residues) spans 1010 to 1027; sequence WGHESPEERHSGRRDFIR. Residues 1042 to 1059 show a composition bias toward basic and acidic residues; it reads GRGEGPGKKDDGRGDDSK. Position 1081 is a phosphoserine (serine 1081). 2 stretches are compositionally biased toward basic and acidic residues: residues 1093–1108 and 1159–1171; these read LLEK…KPSV and KKCE…RGEE. A Glycyl lysine isopeptide (Lys-Gly) (interchain with G-Cter in SUMO2) cross-link involves residue lysine 1105. Serine 1107 carries the post-translational modification Phosphoserine. Position 1175 is a phosphoserine (serine 1175).

The polypeptide is G patch domain-containing protein 8 (GPATCH8) (Homo sapiens (Human)).